Consider the following 392-residue polypeptide: Adenosine 3'-phospho 5'-phosphosulfate transporter 2 (392 aa).

A disordered region spans residues N11–S35. The next 10 helical transmembrane spans lie at C62–V82, P87–E107, L136–L156, P159–I179, G185–A205, N212–G232, V249–G269, F286–L306, I314–F334, and F338–Y358.

This sequence belongs to the nucleotide-sugar transporter family. SLC35B subfamily.

It is found in the golgi apparatus membrane. Its function is as follows. Mediates the transport of adenosine 3'-phospho 5'-phosphosulfate (PAPS), from cytosol into Golgi. PAPS is a universal sulfuryl donor for sulfation events that take place in the Golgi. Essential for viability. Involved in glycosaminoglycan synthesis and the subsequent signaling. May be involved in hh and dpp signaling by controlling the sulfation of heparan sulfate (HS). This chain is Adenosine 3'-phospho 5'-phosphosulfate transporter 2, found in Drosophila pseudoobscura pseudoobscura (Fruit fly).